The following is a 206-amino-acid chain: LOB domain-containing protein 2 (206 aa).

The tract at residues 1-20 is disordered; it reads MMQRNSNNTSITSNISNNSS. Residues 23 to 123 enclose the LOB domain; the sequence is QACASCKHQR…KSLVHNQPLI (101 aa).

Belongs to the LOB domain-containing protein family.

This chain is LOB domain-containing protein 2 (LBD2), found in Arabidopsis thaliana (Mouse-ear cress).